A 142-amino-acid chain; its full sequence is Large ribosomal subunit protein uL13 (142 aa).

This sequence belongs to the universal ribosomal protein uL13 family. As to quaternary structure, part of the 50S ribosomal subunit.

This protein is one of the early assembly proteins of the 50S ribosomal subunit, although it is not seen to bind rRNA by itself. It is important during the early stages of 50S assembly. This Caldicellulosiruptor bescii (strain ATCC BAA-1888 / DSM 6725 / KCTC 15123 / Z-1320) (Anaerocellum thermophilum) protein is Large ribosomal subunit protein uL13.